The following is a 341-amino-acid chain: L-threonine 3-dehydrogenase (341 aa).

Residue cysteine 38 participates in Zn(2+) binding. Active-site charge relay system residues include threonine 40 and histidine 43. Residues histidine 63, glutamate 64, cysteine 93, cysteine 96, cysteine 99, and cysteine 107 each contribute to the Zn(2+) site. NAD(+) contacts are provided by residues isoleucine 175, aspartate 195, arginine 200, 262–264, and 286–287; these read LGI and IY.

It belongs to the zinc-containing alcohol dehydrogenase family. In terms of assembly, homotetramer. Zn(2+) is required as a cofactor.

The protein localises to the cytoplasm. The enzyme catalyses L-threonine + NAD(+) = (2S)-2-amino-3-oxobutanoate + NADH + H(+). It functions in the pathway amino-acid degradation; L-threonine degradation via oxydo-reductase pathway; glycine from L-threonine: step 1/2. Catalyzes the NAD(+)-dependent oxidation of L-threonine to 2-amino-3-ketobutyrate. This is L-threonine 3-dehydrogenase from Cronobacter sakazakii (strain ATCC BAA-894) (Enterobacter sakazakii).